The chain runs to 101 residues: Phosphoribosyl-AMP cyclohydrolase (101 aa).

Mg(2+) is bound at residue aspartate 71. Residue cysteine 72 participates in Zn(2+) binding. Aspartate 73 and aspartate 75 together coordinate Mg(2+). Cysteine 88 and cysteine 95 together coordinate Zn(2+).

It belongs to the PRA-CH family. Homodimer. The cofactor is Mg(2+). It depends on Zn(2+) as a cofactor.

The protein localises to the cytoplasm. The catalysed reaction is 1-(5-phospho-beta-D-ribosyl)-5'-AMP + H2O = 1-(5-phospho-beta-D-ribosyl)-5-[(5-phospho-beta-D-ribosylamino)methylideneamino]imidazole-4-carboxamide. It functions in the pathway amino-acid biosynthesis; L-histidine biosynthesis; L-histidine from 5-phospho-alpha-D-ribose 1-diphosphate: step 3/9. Functionally, catalyzes the hydrolysis of the adenine ring of phosphoribosyl-AMP. The sequence is that of Phosphoribosyl-AMP cyclohydrolase from Bacillus cereus (strain B4264).